A 130-amino-acid chain; its full sequence is Large-conductance mechanosensitive channel (130 aa).

Transmembrane regions (helical) follow at residues 14–34 (IIDL…VTSF) and 73–93 (FVDF…LVKF).

The protein belongs to the MscL family. As to quaternary structure, homopentamer.

The protein resides in the cell membrane. Channel that opens in response to stretch forces in the membrane lipid bilayer. May participate in the regulation of osmotic pressure changes within the cell. In Oceanobacillus iheyensis (strain DSM 14371 / CIP 107618 / JCM 11309 / KCTC 3954 / HTE831), this protein is Large-conductance mechanosensitive channel.